Consider the following 628-residue polypeptide: WDRHGVPVEYEIDKALGITGVKDIHDMGIRKYNKECRKIVLRYTKEWEAVVKRMGRWIDFRNGYRTMDRSFMESIWHIFKMLYEKGSVYRGHRVMPYSTACSTPLSNFEANQNYKDVSDPSILVAFPLRKPFKGYSLSLVAWTTTPWTLPSHMAILVNQSFIYAIFRLKSAFFIMQRDRVNVYFKDAVVISEVKGHELLHLEHDQPFMYYNHYREKGFFRVYHADFVSEIDGTGVVHCSPGFGEDDYKAMTMPGLIKENELLPSPLDENGRFNEEVPEYKGMHVKDADQSIIKDLGKKILYEGKVYHRYPFCWRSDTPLIYKLVPNWFVRVKREIPRLLESNSTINWIPESIGEHKFKNWLSEARDWSISRNRFWGTPIPLWHCDGKYICIGSIEELSRLSGRKIDDIHRENVDDVVICKDGEKYRRIEEVFDCWFESGCMPYAQRHWPFECDNLCLPADFVAEGVDQTRGWFYTMHVISTVLLAKPRFRNCIVNGIVLASDKKKMSKRLKNYPDPMDVINRYSADSLRLYLISSPVVMAENMCFSEEGVGEVLKTLLIPWYNCIYFYSECPNAGDQEQTRMDDWILNTLNTFGNKVKRDMSKYMLQGVMGYATSFVNDLSNWYIRLN.

A 'KMSKS' region motif is present at residues 505–509; it reads KMSKR. Lys508 is a binding site for ATP.

This sequence belongs to the class-I aminoacyl-tRNA synthetase family.

The catalysed reaction is tRNA(Ile) + L-isoleucine + ATP = L-isoleucyl-tRNA(Ile) + AMP + diphosphate. In Antonospora locustae (Microsporidian parasite), this protein is Isoleucine--tRNA ligase.